Consider the following 30-residue polypeptide: Cyclotide hypa-A (30 aa).

A cross-link (cyclopeptide (Gly-Asn)) is located at residues 1 to 30; it reads GIPCAESCVYIPCTITALLGCSCKNKVCYN. 3 disulfides stabilise this stretch: C4–C21, C8–C23, and C13–C28.

In terms of processing, this is a cyclic peptide.

Functionally, probably participates in a plant defense mechanism. This Pombalia parviflora (Violetilla) protein is Cyclotide hypa-A.